The primary structure comprises 595 residues: Estrogen receptor (595 aa).

A modulating (transactivation AF-1); mediates interaction with MACROD1 region spans residues 1 to 184; that stretch reads MTMTLHTKAS…AMESAKETRY (184 aa). A glycan (O-linked (GlcNAc) serine) is linked at Ser-10. A required for interaction with NCOA1 region spans residues 35–47; it reads LERPLGEVYVDGS. Residues 35–174 are interaction with DDX5; self-association; it reads LERPLGEVYV…LASTGDKGSM (140 aa). Phosphoserine; by CDK2 is present on residues Ser-104 and Ser-106. Residue Ser-118 is modified to Phosphoserine. Residues 149 to 173 form a disordered region; that stretch reads FYRPTSDNRRQSGRERLASTGDKGS. Over residues 154 to 165 the composition is skewed to basic and acidic residues; sequence SDNRRQSGRERL. At Ser-167 the chain carries Phosphoserine; by CK2. 2 consecutive NR C4-type zinc fingers follow at residues 185-205 and 221-245; these read CAVCNDYASGYHYGVWSCEGC and CPATNQCTIDKNRRKSCQACRLRKC. Residues 185 to 250 constitute a DNA-binding region (nuclear receptor); sequence CAVCNDYASG…RLRKCYEVGM (66 aa). The mediates interaction with DNTTIP2 stretch occupies residues 185 to 310; the sequence is CAVCNDYASG…TKKNSPALSL (126 aa). The interval 251–310 is hinge; the sequence is MKGGIRKDRRGGRMLKHKRQRDEGEGRNEVGSSGDVRASNLWPSPLLIKHTKKNSPALSL. Basic residues predominate over residues 257–269; sequence KDRRGGRMLKHKR. A disordered region spans residues 257–287; that stretch reads KDRRGGRMLKHKRQRDEGEGRNEVGSSGDVR. Arg-260 bears the Asymmetric dimethylarginine; by PRMT1 mark. The tract at residues 262–595 is interaction with AKAP13; that stretch reads GRMLKHKRQR…EEAGAFPTTV (334 aa). Positions 264 to 595 are self-association; the sequence is MLKHKRQRDE…EEAGAFPTTV (332 aa). The NR LBD domain maps to 311–547; it reads TADQMVSALL…DLLLEMLDAH (237 aa). Residues 311 to 595 are transactivation AF-2; sequence TADQMVSALL…EEAGAFPTTV (285 aa). The 17beta-estradiol site is built by Glu-353 and Arg-394. Residue Cys-447 is the site of S-palmitoyl cysteine attachment. His-524 is a 17beta-estradiol binding site. Residue Tyr-537 is modified to Phosphotyrosine; by Tyr-kinases. A glycan (O-linked (GlcNAc) threonine) is linked at Thr-571.

The protein belongs to the nuclear hormone receptor family. NR3 subfamily. Binds DNA as a homodimer. Can form a heterodimer with ESR2. Interacts with coactivator NCOA5. Interacts with PELP1, the interaction is enhanced by 17-beta-estradiol; the interaction increases ESR1 transcriptional activity. Interacts with NCOA7; the interaction is ligand-inducible. Interacts with AKAP13, CUEDC2, HEXIM1, KDM5A, MAP1S, SMARD1, and UBE1C. Interacts with MUC1; the interaction is stimulated by 7 beta-estradiol (E2) and enhances ESR1-mediated transcription. Interacts with DNTTIP2, and UIMC1. Interacts with KMT2D/MLL2. Interacts with ATAD2; the interaction is enhanced by estradiol. Interacts with KIF18A and LDB1. Interacts with RLIM (via its C-terminus). Interacts with MACROD1. Interacts with SH2D4A and PLCG. Interacts with SH2D4A; the interaction blocks binding to PLCG and inhibits estrogen-induced cell proliferation. Interacts with DYNLL1. Interacts with CCDC62; the interaction requires estradiol and appears to enhance the transcription of target genes. Interacts with NR2C1; the interaction prevents homodimerization of ESR1 and suppresses its transcriptional activity and cell growth. Interacts with DNAAF4. Interacts with PRMT2. Interacts with RBFOX2. Interacts with EP300; the interaction is estrogen-dependent and enhanced by CITED1. Interacts with CITED1; the interaction is estrogen-dependent. Interacts with FAM120B, FOXL2, PHB2 and SLC30A9. Interacts with coactivators NCOA3 and NCOA6. Interacts with STK3/MST2 only in the presence of SAV1 and vice-versa. Binds to CSNK1D. Interacts with NCOA2; NCOA2 can interact with ESR1 AF-1 and AF-2 domains simultaneously and mediate their transcriptional synergy. Interacts with DDX5. Interacts with NCOA1; the interaction seems to require a self-association of N-terminal and C-terminal regions. Interacts with ZNF366, DDX17, NFKB1, RELA, SP1 and SP3. Interacts with NRIP1. Interacts with GPER1; the interaction occurs in an estrogen-dependent manner. Interacts with CLOCK and the interaction is stimulated by estrogen. Interacts with TRIP4 (ufmylated); estrogen dependent. Interacts with LMTK3; the interaction phosphorylates ESR1 (in vitro) and protects it against proteasomal degradation. Interacts with CCAR2 (via N-terminus) in a ligand-independent manner. Interacts with ZFHX3. Interacts with SFR1 in a ligand-dependent and -independent manner. Interacts with DCAF13, LATS1 and DCAF1; regulates ESR1 ubiquitination and ubiquitin-mediated proteasomal degradation. Interacts (via DNA-binding domain) with POU4F2 (C-terminus); this interaction increases the estrogen receptor ESR1 transcriptional activity in a DNA- and ligand 17-beta-estradiol-independent manner. Interacts with ESRRB isoform 1. Interacts with UBE3A and WBP2. Interacts with GTF2B. Interacts with RBM39. In the absence of hormonal ligand, interacts with TACC1. Interacts with PI3KR1 or PI3KR2 and PTK2/FAK1. Interacts with SRC. Interacts with BAG1; the interaction is promoted in the absence of estradiol (17-beta-estradiol/E2). Interacts with and ubiquitinated by STUB1; the interaction is promoted in the absence of estradiol (17-beta-estradiol/E2). Interacts with NEDD8. Ubiquitinated; regulated by LATS1 via DCAF1 it leads to ESR1 proteasomal degradation. Deubiquitinated by OTUB1. Ubiquitinated by STUB1/CHIP; in the CA1 hippocampal region following loss of endogenous circulating estradiol (17-beta-estradiol/E2). Ubiquitinated by UBR5, leading to its degradation: UBR5 specifically recognizes and binds ligand-bound ESR1 when it is not associated with coactivators (NCOAs). In presence of NCOAs, the UBR5-degron is not accessible, preventing its ubiquitination and degradation. In terms of processing, phosphorylated by cyclin A/CDK2 and CK1. Phosphorylation probably enhances transcriptional activity. Dephosphorylation at Ser-118 by PPP5C inhibits its transactivation activity. Phosphorylated by LMTK3 (in vitro). Post-translationally, palmitoylated at Cys-447 by ZDHHC7 and ZDHHC21. Palmitoylation is required for plasma membrane targeting and for rapid intracellular signaling via ERK and AKT kinases and cAMP generation, but not for signaling mediated by the nuclear hormone receptor. Dimethylated by PRMT1 at Arg-260. The methylation may favor cytoplasmic localization. Demethylated by JMJD6 at Arg-260.

Its subcellular location is the nucleus. The protein resides in the cytoplasm. It localises to the golgi apparatus. The protein localises to the cell membrane. Functionally, nuclear hormone receptor. The steroid hormones and their receptors are involved in the regulation of eukaryotic gene expression and affect cellular proliferation and differentiation in target tissues. Ligand-dependent nuclear transactivation involves either direct homodimer binding to a palindromic estrogen response element (ERE) sequence or association with other DNA-binding transcription factors, such as AP-1/c-Jun, c-Fos, ATF-2, Sp1 and Sp3, to mediate ERE-independent signaling. Ligand binding induces a conformational change allowing subsequent or combinatorial association with multiprotein coactivator complexes through LXXLL motifs of their respective components. Mutual transrepression occurs between the estrogen receptor (ER) and NF-kappa-B in a cell-type specific manner. Decreases NF-kappa-B DNA-binding activity and inhibits NF-kappa-B-mediated transcription from the IL6 promoter and displace RELA/p65 and associated coregulators from the promoter. Recruited to the NF-kappa-B response element of the CCL2 and IL8 promoters and can displace CREBBP. Present with NF-kappa-B components RELA/p65 and NFKB1/p50 on ERE sequences. Can also act synergistically with NF-kappa-B to activate transcription involving respective recruitment adjacent response elements; the function involves CREBBP. Can activate the transcriptional activity of TFF1. Also mediates membrane-initiated estrogen signaling involving various kinase cascades. Essential for MTA1-mediated transcriptional regulation of BRCA1 and BCAS3. Maintains neuronal survival in response to ischemic reperfusion injury when in the presence of circulating estradiol (17-beta-estradiol/E2). The polypeptide is Estrogen receptor (ESR1) (Felis catus (Cat)).